The primary structure comprises 365 residues: Histidinol-phosphate aminotransferase (365 aa).

Residues methionine 1–proline 22 are disordered. An N6-(pyridoxal phosphate)lysine modification is found at lysine 221.

Belongs to the class-II pyridoxal-phosphate-dependent aminotransferase family. Histidinol-phosphate aminotransferase subfamily. In terms of assembly, homodimer. The cofactor is pyridoxal 5'-phosphate.

The enzyme catalyses L-histidinol phosphate + 2-oxoglutarate = 3-(imidazol-4-yl)-2-oxopropyl phosphate + L-glutamate. It functions in the pathway amino-acid biosynthesis; L-histidine biosynthesis; L-histidine from 5-phospho-alpha-D-ribose 1-diphosphate: step 7/9. This is Histidinol-phosphate aminotransferase from Rhodopseudomonas palustris (strain BisB5).